A 337-amino-acid chain; its full sequence is L-Ala-D/L-amino acid epimerase (337 aa).

Substrate-binding positions include Thr129 and 151–153; that span reads KIK. Residues Asp177, Glu203, and Asp228 each contribute to the Mg(2+) site. Residues Lys250 and 300-302 each bind substrate; that span reads DMD.

Belongs to the mandelate racemase/muconate lactonizing enzyme family. Requires Mg(2+) as cofactor.

In terms of biological role, broad specificity dipeptide epimerase. Catalyzes the epimerization of L-Ala-L-Ala, L-Ala-L-Glu, L-Ala-L-Ser, L-Ala-L-Thr and L-Ala-L-Met (in vitro). The protein is L-Ala-D/L-amino acid epimerase of Maribacter sp. (strain HTCC2170 / KCCM 42371).